A 195-amino-acid polypeptide reads, in one-letter code: Probable GTP-binding protein EngB (195 aa).

Positions 22-195 (GRPEVALAGR…WAALLPFLTE (174 aa)) constitute an EngB-type G domain. GTP-binding positions include 30 to 37 (GRSNVGKS), 57 to 61 (GKTQT), 75 to 78 (DVPG), 142 to 145 (TKAD), and 174 to 176 (FSS). Positions 37 and 59 each coordinate Mg(2+).

Belongs to the TRAFAC class TrmE-Era-EngA-EngB-Septin-like GTPase superfamily. EngB GTPase family. The cofactor is Mg(2+).

Functionally, necessary for normal cell division and for the maintenance of normal septation. This Geobacillus thermodenitrificans (strain NG80-2) protein is Probable GTP-binding protein EngB.